The chain runs to 379 residues: Succinyl-diaminopimelate desuccinylase (379 aa).

Histidine 70 contacts Zn(2+). The active site involves aspartate 72. A Zn(2+)-binding site is contributed by aspartate 103. Residue glutamate 137 is the Proton acceptor of the active site. Residues glutamate 138, glutamate 166, and histidine 352 each contribute to the Zn(2+) site.

It belongs to the peptidase M20A family. DapE subfamily. In terms of assembly, homodimer. Zn(2+) is required as a cofactor. It depends on Co(2+) as a cofactor.

It carries out the reaction N-succinyl-(2S,6S)-2,6-diaminopimelate + H2O = (2S,6S)-2,6-diaminopimelate + succinate. It functions in the pathway amino-acid biosynthesis; L-lysine biosynthesis via DAP pathway; LL-2,6-diaminopimelate from (S)-tetrahydrodipicolinate (succinylase route): step 3/3. Catalyzes the hydrolysis of N-succinyl-L,L-diaminopimelic acid (SDAP), forming succinate and LL-2,6-diaminopimelate (DAP), an intermediate involved in the bacterial biosynthesis of lysine and meso-diaminopimelic acid, an essential component of bacterial cell walls. The protein is Succinyl-diaminopimelate desuccinylase of Shewanella baltica (strain OS195).